Reading from the N-terminus, the 1252-residue chain is DNA-directed RNA polymerase subunit beta (1252 aa).

Belongs to the RNA polymerase beta chain family. In terms of assembly, the RNAP catalytic core consists of 2 alpha, 1 beta, 1 beta' and 1 omega subunit. When a sigma factor is associated with the core the holoenzyme is formed, which can initiate transcription.

It carries out the reaction RNA(n) + a ribonucleoside 5'-triphosphate = RNA(n+1) + diphosphate. Functionally, DNA-dependent RNA polymerase catalyzes the transcription of DNA into RNA using the four ribonucleoside triphosphates as substrates. The chain is DNA-directed RNA polymerase subunit beta from Chlamydia caviae (strain ATCC VR-813 / DSM 19441 / 03DC25 / GPIC) (Chlamydophila caviae).